Consider the following 315-residue polypeptide: tRNA dimethylallyltransferase (315 aa).

13–20 (GPTASGKT) contributes to the ATP binding site. 15–20 (TASGKT) serves as a coordination point for substrate. Interaction with substrate tRNA regions lie at residues 38–41 (DSAL), 162–166 (QRLSR), 243–248 (RCVGYR), and 276–283 (KRQITWLR).

It belongs to the IPP transferase family. In terms of assembly, monomer. Requires Mg(2+) as cofactor.

It carries out the reaction adenosine(37) in tRNA + dimethylallyl diphosphate = N(6)-dimethylallyladenosine(37) in tRNA + diphosphate. In terms of biological role, catalyzes the transfer of a dimethylallyl group onto the adenine at position 37 in tRNAs that read codons beginning with uridine, leading to the formation of N6-(dimethylallyl)adenosine (i(6)A). The sequence is that of tRNA dimethylallyltransferase from Vibrio vulnificus (strain YJ016).